The chain runs to 289 residues: Nucleotide-binding protein COPRO5265_0725 (289 aa).

9 to 16 (GLSGAGKS) serves as a coordination point for ATP. Position 59-62 (59-62 (DSRS)) interacts with GTP.

This sequence belongs to the RapZ-like family.

Displays ATPase and GTPase activities. The protein is Nucleotide-binding protein COPRO5265_0725 of Coprothermobacter proteolyticus (strain ATCC 35245 / DSM 5265 / OCM 4 / BT).